We begin with the raw amino-acid sequence, 178 residues long: ATP synthase subunit delta (178 aa).

Belongs to the ATPase delta chain family. In terms of assembly, F-type ATPases have 2 components, F(1) - the catalytic core - and F(0) - the membrane proton channel. F(1) has five subunits: alpha(3), beta(3), gamma(1), delta(1), epsilon(1). F(0) has three main subunits: a(1), b(2) and c(10-14). The alpha and beta chains form an alternating ring which encloses part of the gamma chain. F(1) is attached to F(0) by a central stalk formed by the gamma and epsilon chains, while a peripheral stalk is formed by the delta and b chains.

The protein localises to the cell inner membrane. Functionally, f(1)F(0) ATP synthase produces ATP from ADP in the presence of a proton or sodium gradient. F-type ATPases consist of two structural domains, F(1) containing the extramembraneous catalytic core and F(0) containing the membrane proton channel, linked together by a central stalk and a peripheral stalk. During catalysis, ATP synthesis in the catalytic domain of F(1) is coupled via a rotary mechanism of the central stalk subunits to proton translocation. Its function is as follows. This protein is part of the stalk that links CF(0) to CF(1). It either transmits conformational changes from CF(0) to CF(1) or is implicated in proton conduction. The protein is ATP synthase subunit delta of Marinobacter nauticus (strain ATCC 700491 / DSM 11845 / VT8) (Marinobacter aquaeolei).